Reading from the N-terminus, the 282-residue chain is Phosphatidylserine decarboxylase proenzyme (282 aa).

Residues aspartate 89, histidine 145, and serine 249 each act as charge relay system; for autoendoproteolytic cleavage activity in the active site. Catalysis depends on serine 249, which acts as the Schiff-base intermediate with substrate; via pyruvic acid; for decarboxylase activity. Serine 249 carries the pyruvic acid (Ser); by autocatalysis modification.

This sequence belongs to the phosphatidylserine decarboxylase family. PSD-B subfamily. Prokaryotic type I sub-subfamily. As to quaternary structure, heterodimer of a large membrane-associated beta subunit and a small pyruvoyl-containing alpha subunit. It depends on pyruvate as a cofactor. Is synthesized initially as an inactive proenzyme. Formation of the active enzyme involves a self-maturation process in which the active site pyruvoyl group is generated from an internal serine residue via an autocatalytic post-translational modification. Two non-identical subunits are generated from the proenzyme in this reaction, and the pyruvate is formed at the N-terminus of the alpha chain, which is derived from the carboxyl end of the proenzyme. The autoendoproteolytic cleavage occurs by a canonical serine protease mechanism, in which the side chain hydroxyl group of the serine supplies its oxygen atom to form the C-terminus of the beta chain, while the remainder of the serine residue undergoes an oxidative deamination to produce ammonia and the pyruvoyl prosthetic group on the alpha chain. During this reaction, the Ser that is part of the protease active site of the proenzyme becomes the pyruvoyl prosthetic group, which constitutes an essential element of the active site of the mature decarboxylase.

The protein resides in the cell membrane. The enzyme catalyses a 1,2-diacyl-sn-glycero-3-phospho-L-serine + H(+) = a 1,2-diacyl-sn-glycero-3-phosphoethanolamine + CO2. Its pathway is phospholipid metabolism; phosphatidylethanolamine biosynthesis; phosphatidylethanolamine from CDP-diacylglycerol: step 2/2. Its function is as follows. Catalyzes the formation of phosphatidylethanolamine (PtdEtn) from phosphatidylserine (PtdSer). This is Phosphatidylserine decarboxylase proenzyme from Anaeromyxobacter sp. (strain K).